An 89-amino-acid polypeptide reads, in one-letter code: U1-hexatoxin-Iw1e (89 aa).

The signal sequence occupies residues 1–18; the sequence is MLKFVVLIFVVIMASTFA. 5 disulfides stabilise this stretch: cysteine 21-cysteine 32, cysteine 26-cysteine 40, cysteine 31-cysteine 66, cysteine 50-cysteine 74, and cysteine 68-cysteine 81. A propeptide spanning residues 87 to 89 is cleaved from the precursor; sequence RSE.

The protein belongs to the MIT-like AcTx family. As to expression, expressed by the venom gland.

Its subcellular location is the secreted. The protein is U1-hexatoxin-Iw1e of Illawarra wisharti (Illawarra funnel-web spider).